A 375-amino-acid polypeptide reads, in one-letter code: Succinyl-diaminopimelate desuccinylase (375 aa).

Residue His-66 coordinates Zn(2+). Asp-68 is an active-site residue. Residue Asp-99 coordinates Zn(2+). The active-site Proton acceptor is Glu-133. Zn(2+) is bound by residues Glu-134, Glu-162, and His-348.

Belongs to the peptidase M20A family. DapE subfamily. In terms of assembly, homodimer. Zn(2+) serves as cofactor. Co(2+) is required as a cofactor.

The enzyme catalyses N-succinyl-(2S,6S)-2,6-diaminopimelate + H2O = (2S,6S)-2,6-diaminopimelate + succinate. It functions in the pathway amino-acid biosynthesis; L-lysine biosynthesis via DAP pathway; LL-2,6-diaminopimelate from (S)-tetrahydrodipicolinate (succinylase route): step 3/3. Catalyzes the hydrolysis of N-succinyl-L,L-diaminopimelic acid (SDAP), forming succinate and LL-2,6-diaminopimelate (DAP), an intermediate involved in the bacterial biosynthesis of lysine and meso-diaminopimelic acid, an essential component of bacterial cell walls. In Yersinia pestis bv. Antiqua (strain Antiqua), this protein is Succinyl-diaminopimelate desuccinylase.